We begin with the raw amino-acid sequence, 214 residues long: tRNA (guanine-N(7)-)-methyltransferase (214 aa).

4 residues coordinate S-adenosyl-L-methionine: glutamate 43, glutamate 68, aspartate 95, and aspartate 117. Residue aspartate 117 is part of the active site. Residues lysine 121, aspartate 153, and 190 to 193 (TEYE) contribute to the substrate site.

This sequence belongs to the class I-like SAM-binding methyltransferase superfamily. TrmB family.

The enzyme catalyses guanosine(46) in tRNA + S-adenosyl-L-methionine = N(7)-methylguanosine(46) in tRNA + S-adenosyl-L-homocysteine. The protein operates within tRNA modification; N(7)-methylguanine-tRNA biosynthesis. Catalyzes the formation of N(7)-methylguanine at position 46 (m7G46) in tRNA. The chain is tRNA (guanine-N(7)-)-methyltransferase from Staphylococcus aureus (strain JH1).